Here is a 239-residue protein sequence, read N- to C-terminus: tRNA (guanine-N(7)-)-methyltransferase (239 aa).

Glu69, Glu94, Asp121, and Asp144 together coordinate S-adenosyl-L-methionine. Residue Asp144 is part of the active site. Residue Lys148 coordinates substrate. The interval 150–155 (RHNKRR) is interaction with RNA. Substrate-binding positions include Asp180 and 217–220 (TKFE).

Belongs to the class I-like SAM-binding methyltransferase superfamily. TrmB family. Monomer.

The enzyme catalyses guanosine(46) in tRNA + S-adenosyl-L-methionine = N(7)-methylguanosine(46) in tRNA + S-adenosyl-L-homocysteine. Its pathway is tRNA modification; N(7)-methylguanine-tRNA biosynthesis. Functionally, catalyzes the formation of N(7)-methylguanine at position 46 (m7G46) in tRNA. This is tRNA (guanine-N(7)-)-methyltransferase from Escherichia coli O6:K15:H31 (strain 536 / UPEC).